We begin with the raw amino-acid sequence, 412 residues long: Acetylornithine aminotransferase (412 aa).

Pyridoxal 5'-phosphate contacts are provided by residues 109–110 (GA) and F142. R145 contributes to the N(2)-acetyl-L-ornithine binding site. 233–236 (DEVQ) is a binding site for pyridoxal 5'-phosphate. K262 carries the N6-(pyridoxal phosphate)lysine modification. S289 contributes to the N(2)-acetyl-L-ornithine binding site. Pyridoxal 5'-phosphate is bound at residue T290.

It belongs to the class-III pyridoxal-phosphate-dependent aminotransferase family. ArgD subfamily. Homodimer. It depends on pyridoxal 5'-phosphate as a cofactor.

Its subcellular location is the cytoplasm. The catalysed reaction is N(2)-acetyl-L-ornithine + 2-oxoglutarate = N-acetyl-L-glutamate 5-semialdehyde + L-glutamate. It functions in the pathway amino-acid biosynthesis; L-arginine biosynthesis; N(2)-acetyl-L-ornithine from L-glutamate: step 4/4. The protein is Acetylornithine aminotransferase of Thermosynechococcus vestitus (strain NIES-2133 / IAM M-273 / BP-1).